The primary structure comprises 209 residues: A-type ATP synthase subunit D (209 aa).

The protein belongs to the V-ATPase D subunit family. As to quaternary structure, has multiple subunits, A(3), B(3), C, D, E, F, G, I and K(x); there may be a few other subunits as well.

The protein localises to the cell membrane. Component of the A-type ATP synthase that produces ATP from ADP in the presence of a proton gradient across the membrane. The protein is A-type ATP synthase subunit D of Methanosarcina mazei (strain ATCC BAA-159 / DSM 3647 / Goe1 / Go1 / JCM 11833 / OCM 88) (Methanosarcina frisia).